Consider the following 857-residue polypeptide: Catalase-peroxidase (857 aa).

A cross-link (tryptophyl-tyrosyl-methioninium (Trp-Tyr) (with M-356)) is located at residues 207–330 (WHSAGTYRVS…LAAVQMGLIY (124 aa)). His-208 (proton acceptor) is an active-site residue. The segment at residues 330–356 (YVNPEGPNGKPDPIAAAKDIRETFGRM) is a cross-link (tryptophyl-tyrosyl-methioninium (Tyr-Met) (with W-207)). Heme b is bound at residue His-371.

Belongs to the peroxidase family. Peroxidase/catalase subfamily. Homodimer or homotetramer. It depends on heme b as a cofactor. In terms of processing, formation of the three residue Trp-Tyr-Met cross-link is important for the catalase, but not the peroxidase activity of the enzyme.

The enzyme catalyses H2O2 + AH2 = A + 2 H2O. The catalysed reaction is 2 H2O2 = O2 + 2 H2O. Functionally, bifunctional enzyme with both catalase and broad-spectrum peroxidase activity. The polypeptide is Catalase-peroxidase (Rhodopirellula baltica (strain DSM 10527 / NCIMB 13988 / SH1)).